We begin with the raw amino-acid sequence, 895 residues long: Iron-regulated surface determinant protein H (895 aa).

The N-terminal stretch at 1 to 40 is a signal peptide; that stretch reads MNKHHPKLRSFYSIRKSTLGVASVIVSTLFLITSQHQAQA. Positions 42 to 85 are disordered; the sequence is ENTNTSDKISENQNNNATTTQPPKDTNQTQPATQPANTAKNYPA. Low complexity predominate over residues 53-62; that stretch reads NQNNNATTTQ. Polar residues predominate over residues 63-81; sequence PPKDTNQTQPATQPANTAK. The NEAT 1 domain maps to 105–232; that stretch reads DIGPREQVNF…IYNDPSLVKS (128 aa). The segment at 241–324 is disordered; that stretch reads NDQSSSVASN…NQSDVNQQYP (84 aa). Positions 243–276 are enriched in low complexity; sequence QSSSVASNQTNTNTSNQNISTINNANNQPQATTN. Residues 277–323 show a composition bias toward polar residues; it reads MSQPAQPKSSTNADQASSQPAHETNSNGNTNDKTNESSNQSDVNQQY. 2 consecutive NEAT domains span residues 345–471 and 543–660; these read TADN…DYVD and QLTD…TKDD. 3 disordered regions span residues 657–720, 751–782, and 841–868; these read TKDD…DNNI, QIAK…DSNK, and KTKE…GETT. 2 stretches are compositionally biased toward polar residues: residues 663–677 and 687–697; these read SQNN…QTGQ and AENSSTATNPK. Composition is skewed to basic and acidic residues over residues 698–720, 751–765, and 841–854; these read DASD…DNNI, QIAK…KDAD, and KTKE…KENK. A compositionally biased stretch (polar residues) spans 855–868; sequence LSQSKMLPKTGETT. The LPXTG sorting signal signature appears at 861–865; it reads LPKTG. A Pentaglycyl murein peptidoglycan amidated threonine modification is found at threonine 864. Positions 865-895 are cleaved as a propeptide — removed by sortase; the sequence is GETTSSQSWWGLYALLGMLALFIPKFRKESK.

This sequence belongs to the IsdH family.

It is found in the secreted. Its subcellular location is the cell wall. Its function is as follows. Binds human plasma haptoglobin-hemoglobin complexes, haptoglobin and hemoglobin. Binds haptoglobin-hemoglobin complexes with significantly higher affinity than haptoglobin alone. This is Iron-regulated surface determinant protein H (isdH) from Staphylococcus aureus (strain NCTC 8325 / PS 47).